Here is a 543-residue protein sequence, read N- to C-terminus: Methionine--tRNA ligase (543 aa).

A 'HIGH' region motif is present at residues 13–23 (PYANGPLHVGH). Cysteine 145, cysteine 148, cysteine 158, and cysteine 161 together coordinate Zn(2+). The 'KMSKS' region signature appears at 334–338 (QFSKS). Lysine 337 is an ATP binding site.

This sequence belongs to the class-I aminoacyl-tRNA synthetase family. MetG type 1 subfamily. It depends on Zn(2+) as a cofactor.

The protein localises to the cytoplasm. It catalyses the reaction tRNA(Met) + L-methionine + ATP = L-methionyl-tRNA(Met) + AMP + diphosphate. Is required not only for elongation of protein synthesis but also for the initiation of all mRNA translation through initiator tRNA(fMet) aminoacylation. The polypeptide is Methionine--tRNA ligase (Thermoplasma volcanium (strain ATCC 51530 / DSM 4299 / JCM 9571 / NBRC 15438 / GSS1)).